The primary structure comprises 147 residues: Phospholipase A2 SSD1043 (147 aa).

Residues 1–22 (MSPKFMFFSIIAVWSCAAVTEA) form the signal peptide. The propeptide occupies 23–28 (LFIQHR). Cystine bridges form between C55-C71, C70-C130, C77-C123, C86-C116, and C109-C121. Residues G56 and G58 each contribute to the Ca(2+) site. H74 is an active-site residue. Ca(2+) is bound at residue D75. Residue D124 is part of the active site.

It depends on Ca(2+) as a cofactor. Expressed by the venom gland.

Its subcellular location is the secreted. It carries out the reaction a 1,2-diacyl-sn-glycero-3-phosphocholine + H2O = a 1-acyl-sn-glycero-3-phosphocholine + a fatty acid + H(+). In terms of biological role, PLA2 catalyzes the calcium-dependent hydrolysis of the 2-acyl groups in 3-sn-phosphoglycerides. The sequence is that of Phospholipase A2 SSD1043 from Scolopendra dehaani (Thai centipede).